Reading from the N-terminus, the 408-residue chain is Argininosuccinate synthase (408 aa).

ATP-binding positions include 12–20 (AYSGGLDTS) and Ala39. L-citrulline is bound by residues Tyr90 and Ser95. Gly120 lines the ATP pocket. 3 residues coordinate L-aspartate: Thr122, Asn126, and Asp127. L-citrulline is bound at residue Asn126. L-citrulline-binding residues include Arg130, Ser181, Ser190, Glu266, and Tyr278.

It belongs to the argininosuccinate synthase family. Type 1 subfamily. Homotetramer.

The protein localises to the cytoplasm. The enzyme catalyses L-citrulline + L-aspartate + ATP = 2-(N(omega)-L-arginino)succinate + AMP + diphosphate + H(+). Its pathway is amino-acid biosynthesis; L-arginine biosynthesis; L-arginine from L-ornithine and carbamoyl phosphate: step 2/3. This is Argininosuccinate synthase from Methylococcus capsulatus (strain ATCC 33009 / NCIMB 11132 / Bath).